Reading from the N-terminus, the 178-residue chain is ADP-ribosylation factor-like protein 5 (178 aa).

Gly-2 is lipidated: N-myristoyl glycine. Residues 24 to 31, 67 to 71, and 126 to 129 contribute to the GTP site; these read GLDNAGKT, DIGGQ, and NKQD.

This sequence belongs to the small GTPase superfamily. Arf family.

It localises to the golgi apparatus. GTP-binding protein that may be involved in protein trafficking; may modulate vesicle budding and uncoating within the Golgi apparatus. Plays a role in the shedding of pathogen spores from intestinal cells. The protein is ADP-ribosylation factor-like protein 5 (arl-5) of Caenorhabditis elegans.